Consider the following 298-residue polypeptide: Release factor glutamine methyltransferase (298 aa).

Residues 131–135 (GTGTG), Asp162, Trp189, and Asn205 contribute to the S-adenosyl-L-methionine site. A substrate-binding site is contributed by 205–208 (NPPY).

The protein belongs to the protein N5-glutamine methyltransferase family. PrmC subfamily.

It carries out the reaction L-glutaminyl-[peptide chain release factor] + S-adenosyl-L-methionine = N(5)-methyl-L-glutaminyl-[peptide chain release factor] + S-adenosyl-L-homocysteine + H(+). Functionally, methylates the class 1 translation termination release factors RF1/PrfA and RF2/PrfB on the glutamine residue of the universally conserved GGQ motif. The protein is Release factor glutamine methyltransferase of Pasteurella multocida (strain Pm70).